The following is a 117-amino-acid chain: Large ribosomal subunit protein bL19 (117 aa).

It belongs to the bacterial ribosomal protein bL19 family.

Functionally, this protein is located at the 30S-50S ribosomal subunit interface and may play a role in the structure and function of the aminoacyl-tRNA binding site. This is Large ribosomal subunit protein bL19 from Shewanella sediminis (strain HAW-EB3).